Here is a 23-residue protein sequence, read N- to C-terminus: Phospholipase A2 crotoxin basic chain 3 (23 aa).

It depends on Ca(2+) as a cofactor. Post-translationally, contains 7 disulfide bonds. In terms of tissue distribution, expressed by the venom gland.

It localises to the secreted. The enzyme catalyses a 1,2-diacyl-sn-glycero-3-phosphocholine + H2O = a 1-acyl-sn-glycero-3-phosphocholine + a fatty acid + H(+). Functionally, snake venom phospholipase A2 (PLA2) that shows presynaptic neurotoxicity. PLA2 catalyzes the calcium-dependent hydrolysis of the 2-acyl groups in 3-sn-phosphoglycerides. This is Phospholipase A2 crotoxin basic chain 3 from Crotalus durissus terrificus (South American rattlesnake).